The primary structure comprises 106 residues: Integration host factor subunit alpha (106 aa).

It belongs to the bacterial histone-like protein family. In terms of assembly, heterodimer of an alpha and a beta chain.

This protein is one of the two subunits of integration host factor, a specific DNA-binding protein that functions in genetic recombination as well as in transcriptional and translational control. The sequence is that of Integration host factor subunit alpha from Paramagnetospirillum magneticum (strain ATCC 700264 / AMB-1) (Magnetospirillum magneticum).